The chain runs to 273 residues: Large ribosomal subunit protein uL2 (273 aa).

The disordered stretch occupies residues 213–261 (WLGKRPQSRGVAMNPVDHPHGGGEGKSSGGRHPVTPWGVPTKGYKTRVN).

It belongs to the universal ribosomal protein uL2 family. In terms of assembly, part of the 50S ribosomal subunit. Forms a bridge to the 30S subunit in the 70S ribosome.

Its function is as follows. One of the primary rRNA binding proteins. Required for association of the 30S and 50S subunits to form the 70S ribosome, for tRNA binding and peptide bond formation. It has been suggested to have peptidyltransferase activity; this is somewhat controversial. Makes several contacts with the 16S rRNA in the 70S ribosome. This Syntrophotalea carbinolica (strain DSM 2380 / NBRC 103641 / GraBd1) (Pelobacter carbinolicus) protein is Large ribosomal subunit protein uL2.